The following is a 123-amino-acid chain: Venom peptide MmKTx1 (123 aa).

The first 21 residues, 1 to 21 (MSIKISAIALFMLSFTVFVNG), serve as a signal peptide directing secretion.

This sequence belongs to the scorpion La1-like peptide family. Contains 4 disulfide bonds. In terms of tissue distribution, expressed by the venom gland.

The protein localises to the secreted. The protein is Venom peptide MmKTx1 of Olivierus martensii (Manchurian scorpion).